Reading from the N-terminus, the 785-residue chain is Probable serine protease Ga0098714_109514 (785 aa).

Composition is skewed to basic and acidic residues over residues 470–481 (LDHGKNGREGGR) and 491–501 (DGPEHPNHYAD). Disordered stretches follow at residues 470 to 503 (LDHGKNGREGGRDVSAGPHGSDGPEHPNHYADID) and 608 to 629 (DGDASRTVTRHHPRTGEDEEVS).

This sequence belongs to the peptidase S1 family.

Functionally, probably a dedicated protease for substrate gasdermin bGSDM; cleaves the bGSDM precursor, releasing the pore-forming moiety, which integrates into the membrane and triggers cell death. Involved in defense against bacteriophages. Expression of gasdermin bGSDM and this neighboring protease is toxic in E.coli on solid medium. The sequence is that of Probable serine protease Ga0098714_109514 from Bradyrhizobium tropiciagri.